Consider the following 185-residue polypeptide: MTKDVISGMSSHMDKTIDSLRKEYQKVRTGRASTSLLDEIKVDFYGTLSPLNQVATLAVPEPRTITLQPWDAKMIPPIEKAIMNANLGLTPANDGKLIRLNLPPLTEERRKEIVKQLKKFAEDAKVAVRNIRREAIDDLKKLEKEKKISEDDLKRAEKDVQDVTNSHVARIDEVLLHKEKEVMEV.

It belongs to the RRF family.

The protein resides in the cytoplasm. In terms of biological role, responsible for the release of ribosomes from messenger RNA at the termination of protein biosynthesis. May increase the efficiency of translation by recycling ribosomes from one round of translation to another. The chain is Ribosome-recycling factor from Geotalea daltonii (strain DSM 22248 / JCM 15807 / FRC-32) (Geobacter daltonii).